Here is a 142-residue protein sequence, read N- to C-terminus: Galactose-6-phosphate isomerase subunit LacA 2 (142 aa).

The protein belongs to the LacAB/RpiB family. In terms of assembly, heteromultimeric protein consisting of LacA and LacB.

The enzyme catalyses aldehydo-D-galactose 6-phosphate = keto-D-tagatose 6-phosphate. It participates in carbohydrate metabolism; D-galactose 6-phosphate degradation; D-tagatose 6-phosphate from D-galactose 6-phosphate: step 1/1. The chain is Galactose-6-phosphate isomerase subunit LacA 2 from Streptococcus pyogenes serotype M3 (strain ATCC BAA-595 / MGAS315).